Consider the following 100-residue polypeptide: Urease subunit gamma (100 aa).

This sequence belongs to the urease gamma subunit family. As to quaternary structure, heterotrimer of UreA (gamma), UreB (beta) and UreC (alpha) subunits. Three heterotrimers associate to form the active enzyme.

The protein localises to the cytoplasm. The catalysed reaction is urea + 2 H2O + H(+) = hydrogencarbonate + 2 NH4(+). It participates in nitrogen metabolism; urea degradation; CO(2) and NH(3) from urea (urease route): step 1/1. The sequence is that of Urease subunit gamma from Blochmanniella pennsylvanica (strain BPEN).